Reading from the N-terminus, the 227-residue chain is Lipoprotein-releasing system ATP-binding protein LolD (227 aa).

The 222-residue stretch at 6-227 (LTSQKLYKSY…LHEGSLYARE (222 aa)) folds into the ABC transporter domain. 42 to 49 (GPSGSGKS) serves as a coordination point for ATP.

The protein belongs to the ABC transporter superfamily. Lipoprotein translocase (TC 3.A.1.125) family. As to quaternary structure, the complex is composed of two ATP-binding proteins (LolD) and two transmembrane proteins (LolC and LolE).

The protein localises to the cell inner membrane. In terms of biological role, part of the ABC transporter complex LolCDE involved in the translocation of mature outer membrane-directed lipoproteins, from the inner membrane to the periplasmic chaperone, LolA. Responsible for the formation of the LolA-lipoprotein complex in an ATP-dependent manner. The polypeptide is Lipoprotein-releasing system ATP-binding protein LolD (Legionella pneumophila (strain Lens)).